A 448-amino-acid polypeptide reads, in one-letter code: MSQSTATYINVIGAGLAGSEAAYQIAKRGIPVKLYEMRGVKATPQHKTTNFAELVCSNSFRGDSLTNAVGLLKEEMRRLDSIIMRNGEANRVPAGGAMAVDREGYAKSVTAELENHPLIEVIRDEITEIPNDAITVIATGPLTSDALSEKIHAVNGGDGFYFYDAAAPIIDKSTIDMSKVYLKSRYDKGEAAYLNCPMTKEEFMAFHEALTTAEEAPLNAFEKEKYFEGCMPIEVMAKRGIKTMLYGPMKPVGLEYPDDYTGPRDGEFKTPYAVVQLRQDNAAGSLYNIVGFQTHLKWGEQKRVFQMIPGLENAEFVRYGVMHRNSYMDSPNLLTETFQSRSNPNLFFAGQMTGVEGYVESAASGLVAGINAARLFKREEALIFPQTTAIGSLPHYVTHADSKHFQPMNVNFGIIKELEGPRIRDKKERYEAIASRALADLDTCLALL.

13 to 18 (GAGLAG) contributes to the FAD binding site.

The protein belongs to the MnmG family. TrmFO subfamily. FAD serves as cofactor.

The protein resides in the cytoplasm. The enzyme catalyses uridine(54) in tRNA + (6R)-5,10-methylene-5,6,7,8-tetrahydrofolate + NADH + H(+) = 5-methyluridine(54) in tRNA + (6S)-5,6,7,8-tetrahydrofolate + NAD(+). The catalysed reaction is uridine(54) in tRNA + (6R)-5,10-methylene-5,6,7,8-tetrahydrofolate + NADPH + H(+) = 5-methyluridine(54) in tRNA + (6S)-5,6,7,8-tetrahydrofolate + NADP(+). Catalyzes the folate-dependent formation of 5-methyl-uridine at position 54 (M-5-U54) in all tRNAs. This chain is Methylenetetrahydrofolate--tRNA-(uracil-5-)-methyltransferase TrmFO, found in Streptococcus pyogenes serotype M18 (strain MGAS8232).